Reading from the N-terminus, the 308-residue chain is Maspardin (308 aa).

Residues 87–159 (FCDGFRKLLD…NSFWLMPAFM (73 aa)) enclose the AB hydrolase-1 domain. Serine 304 is subject to Phosphoserine.

It belongs to the AB hydrolase superfamily. Interacts with CD4. Interacts with ALDH16A1.

It localises to the cytoplasm. May play a role as a negative regulatory factor in CD4-dependent T-cell activation. This chain is Maspardin (SPG21), found in Pongo abelii (Sumatran orangutan).